The primary structure comprises 155 residues: Cytochrome c oxidase subunit 4, mitochondrial (155 aa).

Residues 1 to 25 (MLSLRQSIRFFKPATRTLCSSRYLL) constitute a mitochondrion transit peptide. The residue at position 55 (threonine 55) is a Phosphothreonine. Residues cysteine 111, histidine 119, cysteine 134, and cysteine 137 each coordinate Zn(2+).

The protein belongs to the cytochrome c oxidase subunit 5B family. In terms of assembly, component of the cytochrome c oxidase (complex IV, CIV), a multisubunit enzyme composed of 12 subunits. The complex is composed of a catalytic core of 3 subunits COX1, COX2 and COX3, encoded in the mitochondrial DNA, and 9 supernumerary subunits COX4, COX5A (or COX5B), COX6, COX7, COX8, COX9, COX12, COX13 and COX26, which are encoded in the nuclear genome. The complex exists as a monomer or a dimer and forms supercomplexes (SCs) in the inner mitochondrial membrane with a dimer of ubiquinol-cytochrome c oxidoreductase (cytochrome b-c1 complex, complex III, CIII), resulting in 2 different assemblies (supercomplexes III(2)IV and III(2)IV(2)).

The protein localises to the mitochondrion inner membrane. It functions in the pathway energy metabolism; oxidative phosphorylation. Its function is as follows. Component of the cytochrome c oxidase, the last enzyme in the mitochondrial electron transport chain which drives oxidative phosphorylation. The respiratory chain contains 3 multisubunit complexes succinate dehydrogenase (complex II, CII), ubiquinol-cytochrome c oxidoreductase (cytochrome b-c1 complex, complex III, CIII) and cytochrome c oxidase (complex IV, CIV), that cooperate to transfer electrons derived from NADH and succinate to molecular oxygen, creating an electrochemical gradient over the inner membrane that drives transmembrane transport and the ATP synthase. Cytochrome c oxidase is the component of the respiratory chain that catalyzes the reduction of oxygen to water. Electrons originating from reduced cytochrome c in the intermembrane space (IMS) are transferred via the dinuclear copper A center (CU(A)) of COX2 and heme A of COX1 to the active site in COX1, a binuclear center (BNC) formed by heme A3 and copper B (CU(B)). The BNC reduces molecular oxygen to 2 water molecules using 4 electrons from cytochrome c in the IMS and 4 protons from the mitochondrial matrix. This chain is Cytochrome c oxidase subunit 4, mitochondrial (COX4), found in Saccharomyces cerevisiae (strain ATCC 204508 / S288c) (Baker's yeast).